Consider the following 607-residue polypeptide: Terpenoid synthase 9 (607 aa).

Positions 356, 360, 501, and 509 each coordinate Mg(2+). A DDXXD motif motif is present at residues 356–360; it reads DDTFD.

Belongs to the terpene synthase family. Tpsa subfamily. Mg(2+) is required as a cofactor. Requires Mn(2+) as cofactor. In terms of tissue distribution, predominantly expressed in roots but also in stems, leaves and flowers.

It is found in the cytoplasm. It participates in secondary metabolite biosynthesis; terpenoid biosynthesis. In terms of biological role, involved in terpene biosynthesis in roots. Possesses diterpene (C20) synthase activity in vitro. Does not seem to be involved in sesquiterpene (C15) biosynthesis. The polypeptide is Terpenoid synthase 9 (Arabidopsis thaliana (Mouse-ear cress)).